A 1730-amino-acid polypeptide reads, in one-letter code: Myosin-7 (1730 aa).

The Myosin N-terminal SH3-like domain occupies 8–56 (TVGSHVWVEDPDDAWIDGEVEEVNSEEITVNCSGKTVVAKLNNVYPKDP). A Myosin motor domain is found at 61–731 (LGVDDMTKLA…QMAEMDAHRA (671 aa)). ATP-binding positions include 155 to 162 (GESGAGKT) and 208 to 216 (NNNSSRFGK). Actin-binding regions lie at residues 494–528 (LIEKKPGGIIALLDEACMFPRSTHDTFAQKLYQTF), 530–553 (NHKRFGKPKLAQTDFTICHYAGDV), 588–612 (FPPLPEESSKTSKFSSIGSQFKQQL), and 612–634 (LQSLLESLSTTEPHYIRCVKPNN). 4 IQ domains span residues 757-786 (LQAASTEIQALCRGQVARVWFETMRREAAS), 782-811 (REAASLRIQKQARTYICQNAYKTLCSSACS), 831-850 (RRATIIIQSQIRRCLCHQRY), and 853-882 (TKKAAITTQCGWRVKVARRELRNLKMAAKE). Residues 883–1224 (TGALQDAKTK…VSDMETAEQI (342 aa)) are a coiled coil. Residues 1327 to 1678 (DRIVPVFGSA…ISNLKLLLTN (352 aa)) form the Dilute domain. Disordered stretches follow at residues 1367-1387 (QSSTGSSPTKPPQPTSFFGRM) and 1456-1520 (DSSV…SSEE). Positions 1456 to 1465 (DSSVVNSPSK) are enriched in low complexity. Basic and acidic residues predominate over residues 1475-1508 (SSEENSPKKSSEENSPKESSGDKSPQKLSDDNSP).

This sequence belongs to the TRAFAC class myosin-kinesin ATPase superfamily. Myosin family. Plant myosin class XI subfamily. As to quaternary structure, homodimer.

Functionally, myosin heavy chain that is required for the cell cycle-regulated transport of various organelles and proteins for their segregation. Functions by binding with its tail domain to receptor proteins on organelles and exerting force with its N-terminal motor domain against actin filaments, thereby transporting its cargo along polarized actin cables. The polypeptide is Myosin-7 (XI-A) (Arabidopsis thaliana (Mouse-ear cress)).